The chain runs to 88 residues: Small ribosomal subunit protein uS15 (88 aa).

Belongs to the universal ribosomal protein uS15 family. In terms of assembly, part of the 30S ribosomal subunit. Forms a bridge to the 50S subunit in the 70S ribosome, contacting the 23S rRNA.

One of the primary rRNA binding proteins, it binds directly to 16S rRNA where it helps nucleate assembly of the platform of the 30S subunit by binding and bridging several RNA helices of the 16S rRNA. Functionally, forms an intersubunit bridge (bridge B4) with the 23S rRNA of the 50S subunit in the ribosome. The polypeptide is Small ribosomal subunit protein uS15 (Leptospira biflexa serovar Patoc (strain Patoc 1 / Ames)).